The chain runs to 266 residues: 5'-nucleotidase SurE (266 aa).

Positions 10, 11, 41, and 97 each coordinate a divalent metal cation.

Belongs to the SurE nucleotidase family. A divalent metal cation is required as a cofactor.

The protein localises to the cytoplasm. It carries out the reaction a ribonucleoside 5'-phosphate + H2O = a ribonucleoside + phosphate. Functionally, nucleotidase that shows phosphatase activity on nucleoside 5'-monophosphates. The sequence is that of 5'-nucleotidase SurE from Methanocella arvoryzae (strain DSM 22066 / NBRC 105507 / MRE50).